The sequence spans 273 residues: 5-deoxy-glucuronate isomerase (273 aa).

It belongs to the isomerase IolB family.

The catalysed reaction is 5-deoxy-D-glucuronate = 5-dehydro-2-deoxy-D-gluconate. The protein operates within polyol metabolism; myo-inositol degradation into acetyl-CoA; acetyl-CoA from myo-inositol: step 4/7. Its function is as follows. Involved in the isomerization of 5-deoxy-glucuronate (5DG) to 5-dehydro-2-deoxy-D-gluconate (DKG or 2-deoxy-5-keto-D-gluconate). The polypeptide is 5-deoxy-glucuronate isomerase (Listeria monocytogenes serovar 1/2a (strain ATCC BAA-679 / EGD-e)).